Here is a 102-residue protein sequence, read N- to C-terminus: NADH-quinone oxidoreductase subunit K (102 aa).

3 consecutive transmembrane segments (helical) span residues 5-25 (LGHF…GIFL), 31-51 (IVLL…FVAF), and 62-82 (VFVF…LAIL).

The protein belongs to the complex I subunit 4L family. In terms of assembly, NDH-1 is composed of 14 different subunits. Subunits NuoA, H, J, K, L, M, N constitute the membrane sector of the complex.

The protein resides in the cell inner membrane. The enzyme catalyses a quinone + NADH + 5 H(+)(in) = a quinol + NAD(+) + 4 H(+)(out). NDH-1 shuttles electrons from NADH, via FMN and iron-sulfur (Fe-S) centers, to quinones in the respiratory chain. The immediate electron acceptor for the enzyme in this species is believed to be ubiquinone. Couples the redox reaction to proton translocation (for every two electrons transferred, four hydrogen ions are translocated across the cytoplasmic membrane), and thus conserves the redox energy in a proton gradient. The chain is NADH-quinone oxidoreductase subunit K from Paracidovorax citrulli (strain AAC00-1) (Acidovorax citrulli).